Consider the following 263-residue polypeptide: Putative hydro-lyase BPUM_0381 (263 aa).

The protein belongs to the D-glutamate cyclase family.

The sequence is that of Putative hydro-lyase BPUM_0381 from Bacillus pumilus (strain SAFR-032).